We begin with the raw amino-acid sequence, 152 residues long: SsrA-binding protein (152 aa).

This sequence belongs to the SmpB family.

Its subcellular location is the cytoplasm. Its function is as follows. Required for rescue of stalled ribosomes mediated by trans-translation. Binds to transfer-messenger RNA (tmRNA), required for stable association of tmRNA with ribosomes. tmRNA and SmpB together mimic tRNA shape, replacing the anticodon stem-loop with SmpB. tmRNA is encoded by the ssrA gene; the 2 termini fold to resemble tRNA(Ala) and it encodes a 'tag peptide', a short internal open reading frame. During trans-translation Ala-aminoacylated tmRNA acts like a tRNA, entering the A-site of stalled ribosomes, displacing the stalled mRNA. The ribosome then switches to translate the ORF on the tmRNA; the nascent peptide is terminated with the 'tag peptide' encoded by the tmRNA and targeted for degradation. The ribosome is freed to recommence translation, which seems to be the essential function of trans-translation. In Rickettsia felis (strain ATCC VR-1525 / URRWXCal2) (Rickettsia azadi), this protein is SsrA-binding protein.